A 335-amino-acid polypeptide reads, in one-letter code: GTPase Obg (335 aa).

Residues 1–158 (MFLDQITIEL…RQVELELKLI (158 aa)) form the Obg domain. Residues 159–334 (ADIGLVGFPN…LNSLFTNKLA (176 aa)) enclose the OBG-type G domain. Residues 165–172 (GFPNAGKS), 190–194 (FTTLQ), 215–218 (DIPG), 285–288 (NKID), and 315–317 (SGL) each bind GTP. Residues Ser-172 and Thr-192 each contribute to the Mg(2+) site.

This sequence belongs to the TRAFAC class OBG-HflX-like GTPase superfamily. OBG GTPase family. Monomer. Requires Mg(2+) as cofactor.

The protein resides in the cytoplasm. An essential GTPase (4.1 pmol GTP/min). Cannot substitute endogenous obg in E.coli, has a partially dominant-negative phenotype upon overexpression in liquid culture leading to decreased growth rate in a concentration-dependent fashion, with 50% of cells being elongated. Binds GTP, GDP and possibly (p)ppGpp with moderate affinity, with high nucleotide exchange rates and a fairly low GTP hydrolysis rate. It may play a role in control of the cell cycle, stress response, ribosome biogenesis and in those bacteria that undergo differentiation, in morphogenesis control. This chain is GTPase Obg, found in Chlamydia abortus (strain DSM 27085 / S26/3) (Chlamydophila abortus).